The chain runs to 428 residues: Glucose-1-phosphate adenylyltransferase (428 aa).

Alpha-D-glucose 1-phosphate-binding positions include Tyr-114, Gly-179, 194 to 195 (EK), and Ser-212.

This sequence belongs to the bacterial/plant glucose-1-phosphate adenylyltransferase family. As to quaternary structure, homotetramer.

It catalyses the reaction alpha-D-glucose 1-phosphate + ATP + H(+) = ADP-alpha-D-glucose + diphosphate. Its pathway is glycan biosynthesis; glycogen biosynthesis. Functionally, involved in the biosynthesis of ADP-glucose, a building block required for the elongation reactions to produce glycogen. Catalyzes the reaction between ATP and alpha-D-glucose 1-phosphate (G1P) to produce pyrophosphate and ADP-Glc. This Yersinia pseudotuberculosis serotype O:1b (strain IP 31758) protein is Glucose-1-phosphate adenylyltransferase.